The sequence spans 333 residues: MNEVKSVGAKYIALTGPTASGKTAAAMAIAQQHDVEIISVDSALVYRGMDIGTAKPTVDELAAVPHHLINIRDPLQAYSAAEFVADAQRLIDDIAARGKLPLLVGGTMLYFKALFYGLDDMPKADPAVRAELASEAAAKGWPALHAELATVDPVTAARLAPHDSQRISRALEVFRVSGQPLSFFHQQNAAKTIADDGREERTEILISLEPQERSWLHHRIAERFDAMLAAGFVEEVKTLRARGDLTPDLPSMRCVGYRQAWELLDAQEARSPGGSFPMDELRDKGIIATRQLAKRQVTWLRSMPQRQIITCDTDQALPLVLQAVAQHIEKSSR.

16-23 is an ATP binding site; that stretch reads GPTASGKT. A substrate-binding site is contributed by 18-23; sequence TASGKT. 3 interaction with substrate tRNA regions span residues 41–44, 165–169, and 253–258; these read DSAL, QRISR, and RCVGYR.

This sequence belongs to the IPP transferase family. Monomer. It depends on Mg(2+) as a cofactor.

The catalysed reaction is adenosine(37) in tRNA + dimethylallyl diphosphate = N(6)-dimethylallyladenosine(37) in tRNA + diphosphate. Functionally, catalyzes the transfer of a dimethylallyl group onto the adenine at position 37 in tRNAs that read codons beginning with uridine, leading to the formation of N6-(dimethylallyl)adenosine (i(6)A). This is tRNA dimethylallyltransferase from Polaromonas sp. (strain JS666 / ATCC BAA-500).